The primary structure comprises 467 residues: ATP-dependent protease ATPase subunit HslU (467 aa).

ATP contacts are provided by residues Ile-18, 60–65, Asp-280, Glu-345, and Arg-417; that span reads GVGKTE.

Belongs to the ClpX chaperone family. HslU subfamily. A double ring-shaped homohexamer of HslV is capped on each side by a ring-shaped HslU homohexamer. The assembly of the HslU/HslV complex is dependent on binding of ATP.

The protein resides in the cytoplasm. In terms of biological role, ATPase subunit of a proteasome-like degradation complex; this subunit has chaperone activity. The binding of ATP and its subsequent hydrolysis by HslU are essential for unfolding of protein substrates subsequently hydrolyzed by HslV. HslU recognizes the N-terminal part of its protein substrates and unfolds these before they are guided to HslV for hydrolysis. The protein is ATP-dependent protease ATPase subunit HslU of Lactobacillus helveticus (strain DPC 4571).